Here is a 279-residue protein sequence, read N- to C-terminus: Thymidylate synthase (279 aa).

141–142 (RR) contacts dUMP. Residue Cys-161 is the Nucleophile of the active site. Residues 181–184 (RSND), Asn-192, and 222–224 (HIY) contribute to the dUMP site. Asp-184 contributes to the (6R)-5,10-methylene-5,6,7,8-tetrahydrofolate binding site. Ala-278 is a binding site for (6R)-5,10-methylene-5,6,7,8-tetrahydrofolate.

It belongs to the thymidylate synthase family. Bacterial-type ThyA subfamily. Homodimer.

The protein resides in the cytoplasm. It catalyses the reaction dUMP + (6R)-5,10-methylene-5,6,7,8-tetrahydrofolate = 7,8-dihydrofolate + dTMP. It functions in the pathway pyrimidine metabolism; dTTP biosynthesis. In terms of biological role, catalyzes the reductive methylation of 2'-deoxyuridine-5'-monophosphate (dUMP) to 2'-deoxythymidine-5'-monophosphate (dTMP) while utilizing 5,10-methylenetetrahydrofolate (mTHF) as the methyl donor and reductant in the reaction, yielding dihydrofolate (DHF) as a by-product. This enzymatic reaction provides an intracellular de novo source of dTMP, an essential precursor for DNA biosynthesis. This Bacillus licheniformis (strain ATCC 14580 / DSM 13 / JCM 2505 / CCUG 7422 / NBRC 12200 / NCIMB 9375 / NCTC 10341 / NRRL NRS-1264 / Gibson 46) protein is Thymidylate synthase.